The chain runs to 60 residues: Large ribosomal subunit protein bL32 (60 aa).

Belongs to the bacterial ribosomal protein bL32 family.

This chain is Large ribosomal subunit protein bL32, found in Clostridium perfringens (strain ATCC 13124 / DSM 756 / JCM 1290 / NCIMB 6125 / NCTC 8237 / Type A).